The chain runs to 338 residues: Solute carrier family 35 member G3 (338 aa).

Residues 1-24 (MAGSHPYFNQPDSTHPSPPSAPPS) form a disordered region. 9 helical membrane-spanning segments follow: residues 37–57 (TSGLLVALLGGGLPAGFVGPL), 67–87 (LPSLELLIWRCLFHLPIALLL), 105–125 (FFCALLNILSIGCAYSAVQVV), 160–180 (CGLLGCILGLIIIVGPGLWTL), 185–205 (TGVYTALGYVEAFLGGLALSL), 221–241 (TVAFLSGLVGLLGSVPGLFVL), 250–270 (LLSWSCVGAVGILALVSFTCV), 281–301 (LVCAVLHSEVVVALILQYYML), and 305–325 (VAPSDIVAAGVVLGSIAIITA). The EamA 1 domain maps to 49-174 (LPAGFVGPLS…CILGLIIIVG (126 aa)). In terms of domain architecture, EamA 2 spans 272 to 325 (YAVTKAHPALVCAVLHSEVVVALILQYYMLHETVAPSDIVAAGVVLGSIAIITA).

It belongs to the SLC35G solute transporter family. As to expression, expressed in testis.

The protein localises to the membrane. The protein is Solute carrier family 35 member G3 (SLC35G3) of Homo sapiens (Human).